A 170-amino-acid polypeptide reads, in one-letter code: ATP synthase subunit b (170 aa).

Residues 20 to 42 (QLLAMLVLLALLKKFALGPLLNI) traverse the membrane as a helical segment.

It belongs to the ATPase B chain family. In terms of assembly, F-type ATPases have 2 components, F(1) - the catalytic core - and F(0) - the membrane proton channel. F(1) has five subunits: alpha(3), beta(3), gamma(1), delta(1), epsilon(1). F(0) has three main subunits: a(1), b(2) and c(10-14). The alpha and beta chains form an alternating ring which encloses part of the gamma chain. F(1) is attached to F(0) by a central stalk formed by the gamma and epsilon chains, while a peripheral stalk is formed by the delta and b chains.

The protein localises to the cell membrane. Its function is as follows. F(1)F(0) ATP synthase produces ATP from ADP in the presence of a proton or sodium gradient. F-type ATPases consist of two structural domains, F(1) containing the extramembraneous catalytic core and F(0) containing the membrane proton channel, linked together by a central stalk and a peripheral stalk. During catalysis, ATP synthesis in the catalytic domain of F(1) is coupled via a rotary mechanism of the central stalk subunits to proton translocation. In terms of biological role, component of the F(0) channel, it forms part of the peripheral stalk, linking F(1) to F(0). The protein is ATP synthase subunit b of Bacillus velezensis (strain DSM 23117 / BGSC 10A6 / LMG 26770 / FZB42) (Bacillus amyloliquefaciens subsp. plantarum).